Reading from the N-terminus, the 1239-residue chain is DNA topoisomerase 2 (1239 aa).

ATP contacts are provided by residues Asn65, Asn96, 124–126 (SSN), 137–144 (GRHGYGAK), and 354–356 (QSK). Residues 434-548 (RTLIVTEGDS…SLLQHNPGYI (115 aa)) form the Toprim domain. The Mg(2+) site is built by Glu440, Asp517, and Asp519. The Topo IIA-type catalytic domain occupies 685 to 1101 (IPHCVDGLKP…TPVKMWLTDL (417 aa)). Tyr775 serves as the catalytic O-(5'-phospho-DNA)-tyrosine intermediate. Residues 956-965 (ALSQRIYING) form an interaction with DNA region. The segment at 1167 to 1206 (PASKRKPEDTYGGALSSGGSTRNVGKRLTGARGAKKKKVV) is disordered.

It belongs to the type II topoisomerase family. In terms of assembly, homodimer. The cofactor is Mg(2+). Mn(2+) serves as cofactor. It depends on Ca(2+) as a cofactor.

It is found in the nucleus. The protein localises to the mitochondrion matrix. It localises to the kinetoplast. The enzyme catalyses ATP-dependent breakage, passage and rejoining of double-stranded DNA.. Its function is as follows. Control of topological states of DNA by transient breakage and subsequent rejoining of DNA strands. Topoisomerase II makes double-strand breaks. The protein is DNA topoisomerase 2 (TOP2) of Crithidia fasciculata.